The following is a 797-amino-acid chain: Outer membrane protein assembly factor BamA (797 aa).

Residues 1–21 (MKLKQIASALMMLGISPLALA) form the signal peptide. POTRA domains are found at residues 23–90 (FTIQ…VIER), 91–171 (PTIG…IDEG), 174–262 (AKIT…VHEG), 265–344 (FRWG…IEPG), and 347–421 (IYVN…LTER).

This sequence belongs to the BamA family. As to quaternary structure, part of the Bam complex.

It localises to the cell outer membrane. In terms of biological role, part of the outer membrane protein assembly complex, which is involved in assembly and insertion of beta-barrel proteins into the outer membrane. This is Outer membrane protein assembly factor BamA from Neisseria meningitidis serogroup B (strain ATCC BAA-335 / MC58).